A 489-amino-acid chain; its full sequence is MKLLTLLSHLPGFWVHHGGNPDIVALEMDSRRVASGSLFFCLKGFTVDGHDFAEEAVARGAAAIVAERPLSVDVPVVLVSDSRRAMAILADAFYGRPTHRLHLIGVTGTNGKTTTTSIIEQIARKTGKKTGLIGTVHIKVGDRSYPAANTTPESLILQRTFKQMVDEGVEFVAMEVSSHALHQGRVHGCDYDVAVFTNLTQDHLDYHGTMEEYRNAKGLLFAQLGNRYDERRPKFAVLNHDDPVSQYYKHMTAAPIVTYGMREKSDVMAEQIRMTAGGMAFRLCTPHGSAAVETKLVGSFNVYNILAAAAACLASGFSLETIAAALADVEPVPGRFETVDEGQNFTIIVDYAHTPDSLENALKTVRQLAKRNVYVVIGCGGDRDPSKRPLMAQVAVRYADVAIFTSDNPRSEDPKQILRDMEAGVSAEIGKHVTIPDREEAIRYAIGQAQEGDVVLIAGKGHETYQIIGNDVIEFDDRAVARAAVKERG.

Residue serine 30 participates in UDP-N-acetyl-alpha-D-muramoyl-L-alanyl-D-glutamate binding. Position 108-114 (108-114 (GTNGKTT)) interacts with ATP. UDP-N-acetyl-alpha-D-muramoyl-L-alanyl-D-glutamate contacts are provided by residues asparagine 149, 150 to 151 (TT), serine 177, glutamine 183, and arginine 185. Lysine 217 is subject to N6-carboxylysine. Residues arginine 383, 407–410 (DNPR), glycine 459, and glutamate 463 contribute to the meso-2,6-diaminopimelate site. The short motif at 407–410 (DNPR) is the Meso-diaminopimelate recognition motif element.

This sequence belongs to the MurCDEF family. MurE subfamily. Mg(2+) serves as cofactor. In terms of processing, carboxylation is probably crucial for Mg(2+) binding and, consequently, for the gamma-phosphate positioning of ATP.

It is found in the cytoplasm. It carries out the reaction UDP-N-acetyl-alpha-D-muramoyl-L-alanyl-D-glutamate + meso-2,6-diaminopimelate + ATP = UDP-N-acetyl-alpha-D-muramoyl-L-alanyl-gamma-D-glutamyl-meso-2,6-diaminopimelate + ADP + phosphate + H(+). It participates in cell wall biogenesis; peptidoglycan biosynthesis. Its function is as follows. Catalyzes the addition of meso-diaminopimelic acid to the nucleotide precursor UDP-N-acetylmuramoyl-L-alanyl-D-glutamate (UMAG) in the biosynthesis of bacterial cell-wall peptidoglycan. The polypeptide is UDP-N-acetylmuramoyl-L-alanyl-D-glutamate--2,6-diaminopimelate ligase (Geobacillus kaustophilus (strain HTA426)).